We begin with the raw amino-acid sequence, 291 residues long: N-acetylmannosamine kinase (291 aa).

ATP contacts are provided by residues 5–12 and 132–139; these read AIDIGGTK and GVGGGVVS. Zn(2+)-binding residues include His156, Cys166, Cys168, and Cys173.

It belongs to the ROK (NagC/XylR) family. NanK subfamily. Homodimer.

It catalyses the reaction an N-acyl-D-mannosamine + ATP = an N-acyl-D-mannosamine 6-phosphate + ADP + H(+). The protein operates within amino-sugar metabolism; N-acetylneuraminate degradation; D-fructose 6-phosphate from N-acetylneuraminate: step 2/5. Its function is as follows. Catalyzes the phosphorylation of N-acetylmannosamine (ManNAc) to ManNAc-6-P. The polypeptide is N-acetylmannosamine kinase (Escherichia coli O9:H4 (strain HS)).